A 324-amino-acid polypeptide reads, in one-letter code: Large ribosomal subunit protein uL3m (324 aa).

The transit peptide at 1–41 (MAAVPRGLLSRINQFLSIRSITPSSSESLPHCSSFFLIRRF) directs the protein to the mitochondrion. The interval 206–229 (PASHGASLSHRSGGSTGQRDAPGK) is disordered.

This sequence belongs to the universal ribosomal protein uL3 family. In terms of assembly, part of the 50S ribosomal subunit.

It localises to the mitochondrion. Functionally, one of the primary rRNA binding proteins, it binds directly near the 3'-end of the 23S rRNA, where it nucleates assembly of the 50S subunit. The sequence is that of Large ribosomal subunit protein uL3m from Arabidopsis thaliana (Mouse-ear cress).